The sequence spans 150 residues: UPF0756 membrane protein NT05HA_0561 (150 aa).

Helical transmembrane passes span 1-21 (MSLQ…LGIF), 52-72 (YGLS…LVSG), 81-101 (AFVS…AWLA), and 128-148 (FLGG…VLIG).

This sequence belongs to the UPF0756 family.

The protein localises to the cell membrane. This Aggregatibacter aphrophilus (strain NJ8700) (Haemophilus aphrophilus) protein is UPF0756 membrane protein NT05HA_0561.